The sequence spans 777 residues: C6 finger domain transcription factor adaR (777 aa).

Residues 1 to 20 (MEQRSSPARSLPPRKTTTTP) are disordered. A DNA-binding region (zn(2)-C6 fungal-type) is located at residues 24-50 (CELCRKRKVKCDKLTPCTNCAASGTVC). Disordered stretches follow at residues 61-85 (GRHA…TDRI), 111-144 (NSHS…NPNT), 182-213 (SSLA…VLGL), 419-440 (PQHI…PNRE), 468-496 (RKVD…DPSW), and 655-699 (LPPS…PTGS). The segment covering 475–489 (PTPTSSTSGTSTSRS) has biased composition (low complexity). Residues 668–677 (ATPPTFPGVP) show a composition bias toward pro residues.

It is found in the nucleus. Its function is as follows. Transcription factor that specifically regulates the expression of the ada gene cluster involved in the biosynthesis of the linear tetracyclic TAN-1612 neuropeptide Y receptor antagonist. The protein is C6 finger domain transcription factor adaR of Aspergillus niger (strain ATCC MYA-4892 / CBS 513.88 / FGSC A1513).